The chain runs to 290 residues: Small ribosomal subunit biogenesis GTPase RsgA (290 aa).

The region spanning 63–220 (KNELIRPPIA…IADTPGFSNL (158 aa)) is the CP-type G domain. Residues 112–115 (NKFD) and 162–170 (GPSGVGKST) contribute to the GTP site. Residues C244, C249, H251, and C257 each contribute to the Zn(2+) site.

It belongs to the TRAFAC class YlqF/YawG GTPase family. RsgA subfamily. Monomer. Associates with 30S ribosomal subunit, binds 16S rRNA. Zn(2+) serves as cofactor.

The protein localises to the cytoplasm. In terms of biological role, one of several proteins that assist in the late maturation steps of the functional core of the 30S ribosomal subunit. Helps release RbfA from mature subunits. May play a role in the assembly of ribosomal proteins into the subunit. Circularly permuted GTPase that catalyzes slow GTP hydrolysis, GTPase activity is stimulated by the 30S ribosomal subunit. The chain is Small ribosomal subunit biogenesis GTPase RsgA from Carboxydothermus hydrogenoformans (strain ATCC BAA-161 / DSM 6008 / Z-2901).